Reading from the N-terminus, the 35-residue chain is Cecropin-A (35 aa).

A Leucine amide modification is found at L35.

In terms of assembly, monomer. As to expression, hemolymph.

Its subcellular location is the secreted. Functionally, cecropins have lytic and antibacterial activity against several Gram-positive and Gram-negative bacteria. Also has activity against fungi. This Heliothis virescens (Tobacco budworm moth) protein is Cecropin-A.